Reading from the N-terminus, the 91-residue chain is UPF0213 protein NGO_1598 (91 aa).

The GIY-YIG domain maps to 4-83 (SNWSVYLILC…AAQKRQLWEQ (80 aa)).

Belongs to the UPF0213 family.

This is UPF0213 protein NGO_1598 from Neisseria gonorrhoeae (strain ATCC 700825 / FA 1090).